The following is a 658-amino-acid chain: Alkyldihydroxyacetonephosphate synthase, peroxisomal (658 aa).

Disordered regions lie at residues 1 to 41 (MAEA…LRVL) and 63 to 86 (AASA…IPKK). The N-terminal 58 residues, 1–58 (MAEAAAAAGGTGLGAGASYGSAADRDRDPDPDRAGRRLRVLSGHLLGRPREALSTNEC), are a transit peptide targeting the peroxisome. Residues 23 to 35 (ADRDRDPDPDRAG) show a composition bias toward basic and acidic residues. Over residues 63 to 77 (AASAATAAPTATPAA) the composition is skewed to low complexity. Position 65 is a phosphoserine (Ser65). The residue at position 74 (Thr74) is a Phosphothreonine. Lys102 carries the post-translational modification N6-acetyllysine. Positions 202–384 (FERIPDIVLW…TEATIKIRPV (183 aa)) constitute an FAD-binding PCMH-type domain. FAD is bound by residues 234–240 (PIGGGTS), 303–309 (DSLEFST), and 316–319 (TRAS). An N6-acetyllysine modification is found at Lys347. 368 to 374 (EGTLGVI) lines the FAD pocket. Arg515 is a substrate binding site. Tyr578 functions as the Proton donor/acceptor in the catalytic mechanism. 2 important for enzyme activity regions span residues 615–617 (HHH) and 654–658 (NRNLL).

Belongs to the FAD-binding oxidoreductase/transferase type 4 family. Homodimer. Requires FAD as cofactor.

Its subcellular location is the peroxisome membrane. It is found in the peroxisome. It catalyses the reaction a long chain fatty alcohol + a 1-acylglycerone 3-phosphate = a 1-O-alkylglycerone 3-phosphate + a long-chain fatty acid + H(+). It carries out the reaction hexadecan-1-ol + 1-hexadecanoylglycerone 3-phosphate = 1-O-hexadecylglycerone 3-phosphate + hexadecanoate + H(+). The catalysed reaction is 1-hexadecanoylglycerone 3-phosphate + a long-chain fatty acid = a 1-acylglycerone 3-phosphate + hexadecanoate. It participates in glycerolipid metabolism; ether lipid biosynthesis. Functionally, catalyzes the exchange of the acyl chain in acyl-dihydroxyacetonephosphate (acyl-DHAP) for a long chain fatty alcohol, yielding the first ether linked intermediate, i.e. alkyl-dihydroxyacetonephosphate (alkyl-DHAP), in the pathway of ether lipid biosynthesis. In Homo sapiens (Human), this protein is Alkyldihydroxyacetonephosphate synthase, peroxisomal (AGPS).